A 254-amino-acid chain; its full sequence is Pre-miRNA 5'-monophosphate methyltransferase (254 aa).

The Bin3-type SAM domain occupies 34–254 (ENRLSLIPEA…DRSLLLFRRQ (221 aa)). Residues Arg-36, Asn-66, Asp-99, and 124 to 125 (DI) each bind S-adenosyl-L-methionine.

This sequence belongs to the methyltransferase superfamily.

It localises to the cytoplasm. The enzyme catalyses a 5'-end 5'-phospho-ribonucleoside-RNA + S-adenosyl-L-methionine = a 5'-end (5'-methylphospho)-ribonucleoside-RNA + S-adenosyl-L-homocysteine. It catalyses the reaction a 5'-end 5'-phospho-ribonucleoside-RNA + 2 S-adenosyl-L-methionine = a 5'-end (5'-bismethylphospho)-ribonucleoside-RNA + 2 S-adenosyl-L-homocysteine. Functionally, O-methyltransferase that specifically monomethylates 5'-monophosphate of cytoplasmic histidyl tRNA (tRNA(His)), acting as a capping enzyme by protecting tRNA(His) from cleavage by DICER1. Also able, with less efficiently, to methylate the 5' monophosphate of a subset of pre-miRNAs, acting as a negative regulator of miRNA processing. The 5' monophosphate of pre-miRNAs is recognized by DICER1 and is required for pre-miRNAs processing: methylation at this position reduces the processing of pre-miRNAs by DICER1. Was also reported to mediate dimethylation of pre-miR-145; however dimethylation cannot be reproduced by another group which observes a monomethylation of pre-miR-145. In Danio rerio (Zebrafish), this protein is Pre-miRNA 5'-monophosphate methyltransferase (bcdin3d).